A 143-amino-acid chain; its full sequence is Alpha-S2-casein-like B (143 aa).

A signal peptide spans 1–15 (MKFIILTCLLAVALA).

This sequence belongs to the alpha-casein family. As to expression, mammary gland specific. Secreted in milk.

Its subcellular location is the secreted. Its function is as follows. Important role in the capacity of milk to transport calcium phosphate. The sequence is that of Alpha-S2-casein-like B (Csn1s2b) from Mus musculus (Mouse).